The sequence spans 172 residues: Myosin regulatory light chain 2, smooth muscle major isoform (172 aa).

Positions 1 to 16 are enriched in basic residues; it reads MSSKRAKAKTTKKRPQ. The disordered stretch occupies residues 1 to 20; sequence MSSKRAKAKTTKKRPQRATS. S2 is modified (N-acetylserine). EF-hand domains follow at residues 29–64, 98–133, and 134–169; these read SQIQEFKEAFNMIDQNRDGFIDKEDLHDMLASMGKN, DPEDVIRNAFACFDEEASGFIHEDHLRELLTTMGDR, and FTDEEVDEMYREAPIDKKGNFNYVEFTRILKHGAKD. Positions 42, 44, 46, and 53 each coordinate Ca(2+).

As to quaternary structure, myosin is a hexamer of 2 heavy chains and 4 light chains.

Functionally, myosin regulatory subunit that plays an important role in regulation of both smooth muscle and nonmuscle cell contractile activity. Implicated in cytokinesis, receptor capping, and cell locomotion. The polypeptide is Myosin regulatory light chain 2, smooth muscle major isoform (Gallus gallus (Chicken)).